Here is a 479-residue protein sequence, read N- to C-terminus: Ribosomal RNA small subunit methyltransferase F (479 aa).

S-adenosyl-L-methionine is bound by residues A125–K131, E149, D176, and D194. Residue C247 is the Nucleophile of the active site.

The protein belongs to the class I-like SAM-binding methyltransferase superfamily. RsmB/NOP family.

Its subcellular location is the cytoplasm. It carries out the reaction cytidine(1407) in 16S rRNA + S-adenosyl-L-methionine = 5-methylcytidine(1407) in 16S rRNA + S-adenosyl-L-homocysteine + H(+). Its function is as follows. Specifically methylates the cytosine at position 1407 (m5C1407) of 16S rRNA. This is Ribosomal RNA small subunit methyltransferase F from Escherichia coli (strain UTI89 / UPEC).